Reading from the N-terminus, the 369-residue chain is Molybdenum import ATP-binding protein ModC (369 aa).

The region spanning 3-246 (TRPEQASKDT…LDLPLAHGDS (244 aa)) is the ABC transporter domain. Residue 44 to 51 (GPSGSGKT) coordinates ATP. The Mop domain maps to 305–369 (DTSILNILPA…AQIKGVAILG (65 aa)).

It belongs to the ABC transporter superfamily. Molybdate importer (TC 3.A.1.8) family. As to quaternary structure, the complex is composed of two ATP-binding proteins (ModC), two transmembrane proteins (ModB) and a solute-binding protein (ModA).

It localises to the cell inner membrane. It carries out the reaction molybdate(out) + ATP + H2O = molybdate(in) + ADP + phosphate + H(+). Functionally, part of the ABC transporter complex ModABC involved in molybdenum import. Responsible for energy coupling to the transport system. This chain is Molybdenum import ATP-binding protein ModC, found in Albidiferax ferrireducens (strain ATCC BAA-621 / DSM 15236 / T118) (Rhodoferax ferrireducens).